Consider the following 196-residue polypeptide: Chloroplastic ATP-dependent Clp protease proteolytic subunit 1 (196 aa).

Serine 101 (nucleophile) is an active-site residue. Histidine 126 is a catalytic residue.

It belongs to the peptidase S14 family. Component of the chloroplastic Clp protease core complex which consist of at least 16 proteins: CLPP4 (3 copies), CLPP5 (3 copies), CLPR4 (2 copies), ClpP1 (1 copy), CLPP6 (1 copy), CLPR2 (1 copy), CLPT1 (1 copy), CLPT2 (1 copy) and 3 copies of CLPP3 and/or CLPR1 and/or CLPR3. The core complex is organized in two heptameric rings, one containing CLPP3,4,5,6 in a 1:2:3:1 ratio and the other CLPP1 and CLPR1,2,3,4 in a 3:1:1:1:1 ratio. In terms of tissue distribution, mostly expressed in leaves. Also detected in stems, and to a lower extent, in roots (at protein level).

Its subcellular location is the plastid. The protein localises to the chloroplast stroma. The enzyme catalyses Hydrolysis of proteins to small peptides in the presence of ATP and magnesium. alpha-casein is the usual test substrate. In the absence of ATP, only oligopeptides shorter than five residues are hydrolyzed (such as succinyl-Leu-Tyr-|-NHMec, and Leu-Tyr-Leu-|-Tyr-Trp, in which cleavage of the -Tyr-|-Leu- and -Tyr-|-Trp bonds also occurs).. Functionally, cleaves peptides in various proteins in a process that requires ATP hydrolysis. Has a chymotrypsin-like activity. Plays a major role in the degradation of misfolded proteins. This chain is Chloroplastic ATP-dependent Clp protease proteolytic subunit 1, found in Arabidopsis thaliana (Mouse-ear cress).